The sequence spans 142 residues: Transcriptional regulator MraZ (142 aa).

2 consecutive SpoVT-AbrB domains span residues 5–47 (EYNH…PMEE) and 76–119 (ANEI…SREK).

The protein belongs to the MraZ family. In terms of assembly, forms oligomers.

The protein resides in the cytoplasm. It is found in the nucleoid. The protein is Transcriptional regulator MraZ of Clostridium tetani (strain Massachusetts / E88).